A 671-amino-acid chain; its full sequence is Putative glycoside hydrolase BT_3595 (671 aa).

The N-terminal stretch at 1 to 24 is a signal peptide; the sequence is MITGIISILCYLQCFGTLSASVTA.

The protein belongs to the glycoside hydrolase-like 3 (GHL3) family.

The protein is Putative glycoside hydrolase BT_3595 of Bacteroides thetaiotaomicron (strain ATCC 29148 / DSM 2079 / JCM 5827 / CCUG 10774 / NCTC 10582 / VPI-5482 / E50).